The following is a 263-amino-acid chain: NADH dehydrogenase [ubiquinone] iron-sulfur protein 3, mitochondrial (263 aa).

The transit peptide at 1–35 (MVAAVARLWWRGLLGASALTRGAGRPSVLLLPVRR) directs the protein to the mitochondrion.

This sequence belongs to the complex I 30 kDa subunit family. Core subunit of respiratory chain NADH dehydrogenase (Complex I) which is composed of 45 different subunits. Interacts with NDUFAF3. Interacts with RAB5IF. Found in subcomplexes containing subunits NDUFS2, MT-ND1 and NDUFA13.

It localises to the mitochondrion inner membrane. The enzyme catalyses a ubiquinone + NADH + 5 H(+)(in) = a ubiquinol + NAD(+) + 4 H(+)(out). Functionally, core subunit of the mitochondrial membrane respiratory chain NADH dehydrogenase (Complex I) which catalyzes electron transfer from NADH through the respiratory chain, using ubiquinone as an electron acceptor. Essential for the catalytic activity and assembly of complex I. This is NADH dehydrogenase [ubiquinone] iron-sulfur protein 3, mitochondrial (NDUFS3) from Gorilla gorilla gorilla (Western lowland gorilla).